The sequence spans 372 residues: Cytochrome b (372 aa).

The next 4 helical transmembrane spans lie at 25–45 (FGSM…FLSM), 69–90 (WMMQ…YIHV), 105–125 (WLSG…GYVL), and 170–190 (FFAL…LHIM). Residues His-75 and His-89 each coordinate heme b. Positions 174 and 188 each coordinate heme b. His-193 lines the a ubiquinone pocket. Helical transmembrane passes span 218–238 (YKDL…ISFI), 280–300 (LGGA…PFTH), 312–332 (FMQL…WTAT), and 339–358 (YTMI…MSNP).

This sequence belongs to the cytochrome b family. The cytochrome bc1 complex contains 3 respiratory subunits (MT-CYB, CYC1 and UQCRFS1), 2 core proteins (UQCRC1 and UQCRC2) and probably 6 low-molecular weight proteins. It depends on heme b as a cofactor.

Its subcellular location is the mitochondrion inner membrane. In terms of biological role, component of the ubiquinol-cytochrome c reductase complex (complex III or cytochrome b-c1 complex) that is part of the mitochondrial respiratory chain. The b-c1 complex mediates electron transfer from ubiquinol to cytochrome c. Contributes to the generation of a proton gradient across the mitochondrial membrane that is then used for ATP synthesis. This chain is Cytochrome b (MT-CYB), found in Acrantophis dumerili (Dumeril's ground boa).